The following is a 509-amino-acid chain: Photosystem II CP47 reaction center protein (509 aa).

The next 6 helical transmembrane spans lie at 21–36 (AVHL…WAGS), 101–115 (IGLS…IWHW), 140–156 (GIHL…FGAF), 203–218 (IAAG…FHLS), 237–252 (VLSS…AFIV), and 457–472 (SFAL…HGGR).

It belongs to the PsbB/PsbC family. PsbB subfamily. In terms of assembly, PSII is composed of 1 copy each of membrane proteins PsbA, PsbB, PsbC, PsbD, PsbE, PsbF, PsbH, PsbI, PsbJ, PsbK, PsbL, PsbM, PsbT, PsbX, PsbY, PsbZ, Psb30/Ycf12, at least 3 peripheral proteins of the oxygen-evolving complex and a large number of cofactors. It forms dimeric complexes. Requires Binds multiple chlorophylls. PSII binds additional chlorophylls, carotenoids and specific lipids. as cofactor.

The protein resides in the plastid. The protein localises to the cyanelle thylakoid membrane. One of the components of the core complex of photosystem II (PSII). It binds chlorophyll and helps catalyze the primary light-induced photochemical processes of PSII. PSII is a light-driven water:plastoquinone oxidoreductase, using light energy to abstract electrons from H(2)O, generating O(2) and a proton gradient subsequently used for ATP formation. The chain is Photosystem II CP47 reaction center protein from Cyanophora paradoxa.